We begin with the raw amino-acid sequence, 430 residues long: Serine carboxypeptidase-like 13 (430 aa).

Residues 1–22 (MSLTLEFLLLLIVLILSHHAHS) form the signal peptide. 3 disulfides stabilise this stretch: Cys-81–Cys-319, Cys-240–Cys-254, and Cys-278–Cys-285. Asn-102 is a glycosylation site (N-linked (GlcNAc...) asparagine). The active site involves Ser-177. Residues Asn-299 and Asn-323 are each glycosylated (N-linked (GlcNAc...) asparagine). Asp-355 is an active-site residue. The N-linked (GlcNAc...) asparagine glycan is linked to Asn-371. Residue His-408 is part of the active site.

The protein belongs to the peptidase S10 family. Expression not detected.

It localises to the secreted. It catalyses the reaction 2 1-O-(trans-sinapoyl)-beta-D-glucose = 1,2-di-O-sinapoyl beta-D-glucose + D-glucose. Functionally, catalyzes the formation of 1,2-bis-O-sinapoyl beta-D-glucoside. This is Serine carboxypeptidase-like 13 (SCPL13) from Arabidopsis thaliana (Mouse-ear cress).